Reading from the N-terminus, the 392-residue chain is NADH-quinone oxidoreductase subunit D (392 aa).

Belongs to the complex I 49 kDa subunit family. In terms of assembly, NDH-1 is composed of 14 different subunits. Subunits NuoB, C, D, E, F, and G constitute the peripheral sector of the complex.

It localises to the cell inner membrane. The catalysed reaction is a quinone + NADH + 5 H(+)(in) = a quinol + NAD(+) + 4 H(+)(out). NDH-1 shuttles electrons from NADH, via FMN and iron-sulfur (Fe-S) centers, to quinones in the respiratory chain. The immediate electron acceptor for the enzyme in this species is believed to be ubiquinone. Couples the redox reaction to proton translocation (for every two electrons transferred, four hydrogen ions are translocated across the cytoplasmic membrane), and thus conserves the redox energy in a proton gradient. The polypeptide is NADH-quinone oxidoreductase subunit D (Parvibaculum lavamentivorans (strain DS-1 / DSM 13023 / NCIMB 13966)).